The sequence spans 445 residues: von Willebrand factor A domain-containing protein 1 (445 aa).

The first 22 residues, 1–22, serve as a signal peptide directing secretion; sequence MLPWTALGLALSLRLALARSGA. In terms of domain architecture, VWFA spans 34 to 213; it reads DLMFLLDSSA…ELRGSILDAM (180 aa). A phosphoserine; by FAM20C mark is found at Ser74 and Ser80. Tyr83 carries the post-translational modification Phosphotyrosine. The residue at position 93 (Ser93) is a Phosphoserine; by FAM20C. Residues 214–304 enclose the Fibronectin type-III 1 domain; sequence RPQQLHATEI…QILRVRTRPG (91 aa). N-linked (GlcNAc...) asparagine glycosylation is present at Asn264. Disordered regions lie at residues 302–325 and 411–445; these read RPGE…TQLA and RESA…SREP. The segment covering 311-325 has biased composition (low complexity); it reads SGPESGAGPAPTQLA. A Fibronectin type-III 2 domain is found at 334-427; sequence GPERIVISHA…KACTPDGPRP (94 aa).

Homodimer or homomultimer; disulfide-linked. Interacts with HSPG2. Post-translationally, N-glycosylated.

It localises to the secreted. Its subcellular location is the extracellular space. The protein localises to the extracellular matrix. The protein resides in the basement membrane. Promotes matrix assembly. Involved in the organization of skeletal muscles and in the formation of neuromuscular junctions. This chain is von Willebrand factor A domain-containing protein 1, found in Homo sapiens (Human).